Here is a 237-residue protein sequence, read N- to C-terminus: MOB kinase activator 2 (237 aa).

The interval 1 to 21 is disordered; that stretch reads MDWLMGKSKAKPNGKKPAAEE. Zn(2+) is bound by residues C78, C83, H157, and H162. The span at 217–229 shows a compositional bias: gly residues; the sequence is GGSGDGAGSGGPG. Positions 217 to 237 are disordered; the sequence is GGSGDGAGSGGPGAQNHVKER.

The protein belongs to the MOB1/phocein family. As to quaternary structure, binds STK38 and STK38L. Post-translationally, phosphorylated.

The protein localises to the nucleus. Its subcellular location is the cytoplasm. It is found in the perinuclear region. Stimulates the autophosphorylation and kinase activity of STK38 and STK38L. The polypeptide is MOB kinase activator 2 (MOB2) (Homo sapiens (Human)).